The primary structure comprises 512 residues: Cytochrome P450 71BT1 (512 aa).

Positions 1 to 24 are cleaved as a signal peptide; that stretch reads MENLFIFLFALLLFCFMLLKLSKK. Residues asparagine 111 and asparagine 168 are each glycosylated (N-linked (GlcNAc...) asparagine). A heme-binding site is contributed by cysteine 447.

This sequence belongs to the cytochrome P450 family.

The polypeptide is Cytochrome P450 71BT1 (Catharanthus roseus (Madagascar periwinkle)).